The sequence spans 1215 residues: Inner capsid protein VP3 (1215 aa).

The interval 1 to 81 is disordered; that stretch reads MPRRPRRNAK…RVDNDGDVIT (81 aa). Residues 21-44 show a composition bias toward low complexity; sequence LVAPAANASVSSTVNTTTSPTLAA. Residues 118-141 form a C2H2-type zinc finger; that stretch reads YRCNVCNAEFPSMSAMTEHLRTSH.

The protein belongs to the turreted BTV-fold inner capsid family. In terms of assembly, homodecamer; each decamer is made up of two conformers of VP2, called VP2A and VP2B. 12 homodecamers assemble to form an icosahedral capsid. Interacts with VP6.

The protein resides in the virion. Its function is as follows. Inner capsid protein that self-assembles to form an icosahedral capsid with a T=2 symmetry, which consists of 120 copies of VP2, with channels at each of its five-fold vertices. This capsid constitutes the innermost concentric layer of the viral mature particle. In Ctenopharyngodon idella (Grass carp), this protein is Inner capsid protein VP3 (S3).